A 190-amino-acid chain; its full sequence is Ladderlectin (190 aa).

Residues 1 to 18 form the signal peptide; it reads MAMLTISLLLCAAVALNG. Positions 60 to 179 constitute a C-type lectin domain; sequence GSRCFMFVET…GNSFPSGVLQ (120 aa). A disulfide bridge links C153 with C169.

Multimeric. As to expression, expressed in cells of the branchial epithelium, hepatic sinusoids, biliary epithelium, renal interstitium, skin, and sub-mucosal granular layer of the intestine. Highly expressed in caudal kidney. Moderately expressed in liver. Weakly expressed in gill, spleen, cranial kidney and skin. Isoform 1 is highly expressed in intestine. Isoform 2 is weakly expressed in intestine.

Its function is as follows. Lectin that binds sepharose in a calcium-dependent manner. The chain is Ladderlectin from Oncorhynchus mykiss (Rainbow trout).